Here is a 258-residue protein sequence, read N- to C-terminus: Imidazole glycerol phosphate synthase subunit HisF (258 aa).

Residues Asp11 and Asp130 contribute to the active site.

Belongs to the HisA/HisF family. As to quaternary structure, heterodimer of HisH and HisF.

It localises to the cytoplasm. It catalyses the reaction 5-[(5-phospho-1-deoxy-D-ribulos-1-ylimino)methylamino]-1-(5-phospho-beta-D-ribosyl)imidazole-4-carboxamide + L-glutamine = D-erythro-1-(imidazol-4-yl)glycerol 3-phosphate + 5-amino-1-(5-phospho-beta-D-ribosyl)imidazole-4-carboxamide + L-glutamate + H(+). Its pathway is amino-acid biosynthesis; L-histidine biosynthesis; L-histidine from 5-phospho-alpha-D-ribose 1-diphosphate: step 5/9. Functionally, IGPS catalyzes the conversion of PRFAR and glutamine to IGP, AICAR and glutamate. The HisF subunit catalyzes the cyclization activity that produces IGP and AICAR from PRFAR using the ammonia provided by the HisH subunit. This is Imidazole glycerol phosphate synthase subunit HisF from Cronobacter sakazakii (strain ATCC BAA-894) (Enterobacter sakazakii).